Consider the following 200-residue polypeptide: NADH-quinone oxidoreductase subunit B (200 aa).

[4Fe-4S] cluster contacts are provided by Cys78, Cys79, Cys144, and Cys174.

This sequence belongs to the complex I 20 kDa subunit family. As to quaternary structure, NDH-1 is composed of 14 different subunits. Subunits NuoB, C, D, E, F, and G constitute the peripheral sector of the complex. Requires [4Fe-4S] cluster as cofactor.

It localises to the cell membrane. It catalyses the reaction a quinone + NADH + 5 H(+)(in) = a quinol + NAD(+) + 4 H(+)(out). Its function is as follows. NDH-1 shuttles electrons from NADH, via FMN and iron-sulfur (Fe-S) centers, to quinones in the respiratory chain. The immediate electron acceptor for the enzyme in this species is believed to be ubiquinone. Couples the redox reaction to proton translocation (for every two electrons transferred, four hydrogen ions are translocated across the cytoplasmic membrane), and thus conserves the redox energy in a proton gradient. The sequence is that of NADH-quinone oxidoreductase subunit B from Dehalococcoides mccartyi (strain CBDB1).